A 356-amino-acid chain; its full sequence is Manganese-dependent ADP-ribose/CDP-alcohol diphosphatase (356 aa).

Positions 32, 34, 81, 117, 253, 290, and 292 each coordinate Zn(2+).

It belongs to the ADPRibase-Mn family. As to quaternary structure, monomer. It depends on Mg(2+) as a cofactor.

The enzyme catalyses CDP-choline + H2O = phosphocholine + CMP + 2 H(+). It catalyses the reaction ADP-D-ribose + H2O = D-ribose 5-phosphate + AMP + 2 H(+). It carries out the reaction CDP-glycerol + H2O = sn-glycerol 3-phosphate + CMP + 2 H(+). In terms of biological role, hydrolyzes ADP-ribose, IDP-ribose, CDP-glycerol, CDP-choline and CDP-ethanolamine, but not other non-reducing ADP-sugars or CDP-glucose. In Xenopus laevis (African clawed frog), this protein is Manganese-dependent ADP-ribose/CDP-alcohol diphosphatase (adprm).